Here is a 590-residue protein sequence, read N- to C-terminus: Aspartate--tRNA(Asp/Asn) ligase (590 aa).

Glu-173 serves as a coordination point for L-aspartate. Residues 197–200 (QIFK) are aspartate. Arg-219 lines the L-aspartate pocket. Residues 219–221 (RDE) and Gln-228 each bind ATP. Residue His-450 participates in L-aspartate binding. An ATP-binding site is contributed by Glu-484. Position 491 (Arg-491) interacts with L-aspartate. An ATP-binding site is contributed by 536 to 539 (GLDR).

It belongs to the class-II aminoacyl-tRNA synthetase family. Type 1 subfamily. Homodimer.

It is found in the cytoplasm. It catalyses the reaction tRNA(Asx) + L-aspartate + ATP = L-aspartyl-tRNA(Asx) + AMP + diphosphate. In terms of biological role, aspartyl-tRNA synthetase with relaxed tRNA specificity since it is able to aspartylate not only its cognate tRNA(Asp) but also tRNA(Asn). Reaction proceeds in two steps: L-aspartate is first activated by ATP to form Asp-AMP and then transferred to the acceptor end of tRNA(Asp/Asn). This Coxiella burnetii (strain RSA 331 / Henzerling II) protein is Aspartate--tRNA(Asp/Asn) ligase.